Consider the following 186-residue polypeptide: Ribosome-recycling factor (186 aa).

Belongs to the RRF family.

Its subcellular location is the cytoplasm. Functionally, responsible for the release of ribosomes from messenger RNA at the termination of protein biosynthesis. May increase the efficiency of translation by recycling ribosomes from one round of translation to another. The polypeptide is Ribosome-recycling factor (Chlorobium luteolum (strain DSM 273 / BCRC 81028 / 2530) (Pelodictyon luteolum)).